The primary structure comprises 522 residues: Zinc finger and BTB domain-containing protein 18 (522 aa).

The region spanning 24–91 (CDCTVLVGDA…MYEGKLQFKD (68 aa)) is the BTB domain. Over residues 121–143 (ATTEADSTKKEEDASSCSDKVES) the composition is skewed to basic and acidic residues. A disordered region spans residues 121–166 (ATTEADSTKKEEDASSCSDKVESLSDGSSHMAGDLPSDEDEGEDDK). At Ser-157 the chain carries Phosphoserine. A Glycyl lysine isopeptide (Lys-Gly) (interchain with G-Cter in SUMO2) cross-link involves residue Lys-273. Residues 310–427 (EPAHLAPLRE…TFSCMYTLKR (118 aa)) are interaction with DNMT3A. 4 consecutive C2H2-type zinc fingers follow at residues 370 to 392 (FMCP…LSTH), 410 to 432 (PTCS…ERTH), 438 to 460 (YTCT…AVVH), and 466 to 489 (HACK…RKFH). A phosphoserine mark is found at Ser-516 and Ser-517.

The protein belongs to the krueppel C2H2-type zinc-finger protein family. ZBTB18 subfamily. Interacts with DNMT3A.

The protein resides in the nucleus. Its function is as follows. Transcriptional repressor that plays a role in various developmental processes such as myogenesis and brain development. Specifically binds the consensus DNA sequence 5'-[AC]ACATCTG[GT][AC]-3' which contains the E box core, and acts by recruiting chromatin remodeling multiprotein complexes. Plays a key role in myogenesis by directly repressing the expression of ID2 and ID3, 2 inhibitors of skeletal myogenesis. Also involved in controlling cell division of progenitor cells and regulating the survival of postmitotic cortical neurons. May also play a role in the organization of chromosomes in the nucleus. The protein is Zinc finger and BTB domain-containing protein 18 (Zbtb18) of Rattus norvegicus (Rat).